We begin with the raw amino-acid sequence, 289 residues long: Phosphate import ATP-binding protein PstB 2 (289 aa).

Residues 37-276 form the ABC transporter domain; sequence LHAKVEAFYY…HTPVIFQNPT (240 aa). 69-76 provides a ligand contact to ATP; that stretch reads GPSGCGKS.

It belongs to the ABC transporter superfamily. Phosphate importer (TC 3.A.1.7) family. In terms of assembly, the complex is composed of two ATP-binding proteins (PstB), two transmembrane proteins (PstC and PstA) and a solute-binding protein (PstS).

The protein localises to the cell inner membrane. It catalyses the reaction phosphate(out) + ATP + H2O = ADP + 2 phosphate(in) + H(+). Functionally, part of the ABC transporter complex PstSACB involved in phosphate import. Responsible for energy coupling to the transport system. The protein is Phosphate import ATP-binding protein PstB 2 of Trichormus variabilis (strain ATCC 29413 / PCC 7937) (Anabaena variabilis).